The sequence spans 65 residues: Large ribosomal subunit protein bL35 (65 aa).

Over residues 1–10 (MPKMKTDRGA) the composition is skewed to basic and acidic residues. A disordered region spans residues 1–24 (MPKMKTDRGAAKRFKKTGSGGFKC).

This sequence belongs to the bacterial ribosomal protein bL35 family.

The sequence is that of Large ribosomal subunit protein bL35 from Tolumonas auensis (strain DSM 9187 / NBRC 110442 / TA 4).